The following is a 466-amino-acid chain: 3-isopropylmalate dehydratase large subunit (466 aa).

Cysteine 347, cysteine 407, and cysteine 410 together coordinate [4Fe-4S] cluster.

It belongs to the aconitase/IPM isomerase family. LeuC type 1 subfamily. Heterodimer of LeuC and LeuD. [4Fe-4S] cluster serves as cofactor.

The enzyme catalyses (2R,3S)-3-isopropylmalate = (2S)-2-isopropylmalate. The protein operates within amino-acid biosynthesis; L-leucine biosynthesis; L-leucine from 3-methyl-2-oxobutanoate: step 2/4. In terms of biological role, catalyzes the isomerization between 2-isopropylmalate and 3-isopropylmalate, via the formation of 2-isopropylmaleate. In Escherichia coli O139:H28 (strain E24377A / ETEC), this protein is 3-isopropylmalate dehydratase large subunit.